The following is a 266-amino-acid chain: Thiazole synthase (266 aa).

Lys106 acts as the Schiff-base intermediate with DXP in catalysis. 1-deoxy-D-xylulose 5-phosphate contacts are provided by residues Gly167, Ala193–Gly194, and Asn215–Thr216.

Belongs to the ThiG family. Homotetramer. Forms heterodimers with either ThiH or ThiS.

Its subcellular location is the plastid. The protein localises to the chloroplast. It carries out the reaction [ThiS sulfur-carrier protein]-C-terminal-Gly-aminoethanethioate + 2-iminoacetate + 1-deoxy-D-xylulose 5-phosphate = [ThiS sulfur-carrier protein]-C-terminal Gly-Gly + 2-[(2R,5Z)-2-carboxy-4-methylthiazol-5(2H)-ylidene]ethyl phosphate + 2 H2O + H(+). Its pathway is cofactor biosynthesis; thiamine diphosphate biosynthesis. Its function is as follows. Catalyzes the rearrangement of 1-deoxy-D-xylulose 5-phosphate (DXP) to produce the thiazole phosphate moiety of thiamine. Sulfur is provided by the thiocarboxylate moiety of the carrier protein ThiS. In vitro, sulfur can be provided by H(2)S. The chain is Thiazole synthase from Cyanidium caldarium (Red alga).